A 48-amino-acid polypeptide reads, in one-letter code: ALLSCKCEANSGYGDKWLFHGGCPNGYGYNERCFIKPGAVCCYPPSGR.

3 cysteine pairs are disulfide-bonded: Cys5-Cys41, Cys7-Cys33, and Cys23-Cys42. Ser46 carries the post-translational modification Serine amide. Positions Gly47–Arg48 are cleaved as a propeptide — removed in mature form.

It belongs to the sea anemone type 3 (BDS) potassium channel toxin family.

Its subcellular location is the secreted. In terms of biological role, neurotoxin that induces paralysis when injected into crabs. May function in antimicrobial activity as it displays inhibitory activity towards the B.licheniformis enzyme subtilisin A (SUBTA) and the recombinant S.maltophilia protease 1 (rStmPr1) enzyme. Also displays inhibitory activity against various proteases including the porcine pancreatic elastase (PPE) and proteinase K (PK). The protein is U-actitoxin-Cgg3 of Condylactis gigantea (Giant Caribbean anemone).